The chain runs to 404 residues: UPF0261 protein CTC_01794 (404 aa).

Belongs to the UPF0261 family.

The polypeptide is UPF0261 protein CTC_01794 (Clostridium tetani (strain Massachusetts / E88)).